A 275-amino-acid chain; its full sequence is Thiazole synthase (275 aa).

The Schiff-base intermediate with DXP role is filled by lysine 108. Residues glycine 169, 196–197, and 218–219 each bind 1-deoxy-D-xylulose 5-phosphate; these read AG and NT.

It belongs to the ThiG family. Homotetramer. Forms heterodimers with either ThiH or ThiS.

The protein localises to the cytoplasm. The enzyme catalyses [ThiS sulfur-carrier protein]-C-terminal-Gly-aminoethanethioate + 2-iminoacetate + 1-deoxy-D-xylulose 5-phosphate = [ThiS sulfur-carrier protein]-C-terminal Gly-Gly + 2-[(2R,5Z)-2-carboxy-4-methylthiazol-5(2H)-ylidene]ethyl phosphate + 2 H2O + H(+). It participates in cofactor biosynthesis; thiamine diphosphate biosynthesis. In terms of biological role, catalyzes the rearrangement of 1-deoxy-D-xylulose 5-phosphate (DXP) to produce the thiazole phosphate moiety of thiamine. Sulfur is provided by the thiocarboxylate moiety of the carrier protein ThiS. In vitro, sulfur can be provided by H(2)S. This Ralstonia pickettii (strain 12J) protein is Thiazole synthase.